The following is a 96-amino-acid chain: Muconolactone Delta-isomerase (96 aa).

Belongs to the muconolactone Delta-isomerase family. Homodecamer.

It catalyses the reaction (S)-muconolactone = (4,5-dihydro-5-oxofuran-2-yl)-acetate. It participates in aromatic compound metabolism; beta-ketoadipate pathway; 5-oxo-4,5-dihydro-2-furylacetate from catechol: step 3/3. This Pseudomonas putida (Arthrobacter siderocapsulatus) protein is Muconolactone Delta-isomerase (catC).